We begin with the raw amino-acid sequence, 635 residues long: Sodium- and chloride-dependent creatine transporter 1 (635 aa).

The disordered stretch occupies residues 1-35 (MAKKSAENGIYSVSGDEKKGPLIAPGPDGAPAKGD). Topologically, residues 1 to 60 (MAKKSAENGIYSVSGDEKKGPLIAPGPDGAPAKGDGPAGLGAPGGCLAVPPRETWTRQMD) are cytoplasmic. Residues 25 to 35 (PGPDGAPAKGD) show a composition bias toward low complexity. The chain crosses the membrane as a helical span at residues 61 to 81 (FIMSCVGFAVGLGNVWRFPYL). Topologically, residues 82 to 87 (CYKNGG) are extracellular. Residues 88 to 108 (GVFLIPYVLIALVGGIPIFFL) traverse the membrane as a helical segment. Residues 109–138 (EISLGQFMKAGSINVWNICPLFKGLGYASM) lie on the Cytoplasmic side of the membrane. The helical transmembrane segment at 139–159 (VIVFYCNTYYIMVLAWGFYYL) threads the bilayer. Topologically, residues 160-230 (VKSFTTTLPW…LSGGLEVPGA (71 aa)) are extracellular. 2 N-linked (GlcNAc...) asparagine glycosylation sites follow: Asn192 and Asn197. The helical transmembrane segment at 231-251 (LNSEVTLCLLACWVLVYFCVW) threads the bilayer. Residues 252-269 (KGVKSTGKIVYFTATFPY) are Cytoplasmic-facing. A helical transmembrane segment spans residues 270–290 (VVLVVLLVRGVLLPGALDGII). The Extracellular portion of the chain corresponds to 291 to 304 (YYLKPDWSKLRSPQ). Residues 305-325 (VWIDAGTQIFFSYAIGLGALT) traverse the membrane as a helical segment. The Cytoplasmic segment spans residues 326 to 341 (ALGSYNRFNNNCYKDA). The chain crosses the membrane as a helical span at residues 342–362 (IILALINSGTSFFAGFVVFSI). The Extracellular segment spans residues 363–394 (LGFMATEQGVHISKVAESGPGLAFIAYPRAVT). A helical membrane pass occupies residues 395–415 (LMPVAPLWAALFFFMLLLLGL). The Cytoplasmic portion of the chain corresponds to 416-444 (DSQFVGVEGFITGLLDLLPASYYFRFQRE). A helical membrane pass occupies residues 445–465 (ISVALCCALCFVIDLSMVQMA). Topologically, residues 466–479 (GMYVFQLFDYYSAS) are extracellular. Residues 480-500 (GTTLLWQAFWECVAVAWVYGA) form a helical membrane-spanning segment. Residues 501-520 (DRFMDDIACMIGYRPCPWMK) lie on the Cytoplasmic side of the membrane. The chain crosses the membrane as a helical span at residues 521–541 (WCWSFFTPLVCMGIFIFNIVY). Topologically, residues 542–560 (YKPLVYNKTYVYPWWGEAM) are extracellular. Asn548 carries N-linked (GlcNAc...) asparagine glycosylation. The helical transmembrane segment at 561–581 (GWAFALSSMLCVPLHLLGCLL) threads the bilayer. Topologically, residues 582-635 (RAKGTMAERWQHLTQPVWGLHHLEYRAQDADVRGLTTLTPVSESSKVVVVESVM) are cytoplasmic. A phosphothreonine mark is found at Thr617 and Thr620. Phosphoserine is present on Ser623.

The protein belongs to the sodium:neurotransmitter symporter (SNF) (TC 2.A.22) family. SLC6A8 subfamily. In terms of processing, glycosylated. As to expression, prominent in kidney, heart, and muscle, also present in brain, but not in liver and intestine.

It localises to the cell membrane. The protein resides in the apical cell membrane. It carries out the reaction creatine(out) + chloride(out) + 2 Na(+)(out) = creatine(in) + chloride(in) + 2 Na(+)(in). Its function is as follows. Creatine:sodium symporter which mediates the uptake of creatine. Plays an important role in supplying creatine to the brain via the blood-brain barrier. In Oryctolagus cuniculus (Rabbit), this protein is Sodium- and chloride-dependent creatine transporter 1 (SLC6A8).